We begin with the raw amino-acid sequence, 29 residues long: Cytolysin Uc-1 (29 aa).

Residues 1 to 15 (DEQTGSKGPNENLPS) show a composition bias toward polar residues. Positions 1–29 (DEQTGSKGPNENLPSQKDLXAKASXLTEV) are disordered.

The protein localises to the secreted. It localises to the nematocyst. It is found in the target cell membrane. Functionally, pore-forming toxin that lyses bovine erythrocytes at nanomolar concentrations. Is devoid of enzymatic activity. Binds to monolayers and efficiently permeabilizes small lipid vesicles composed of sphingomyelin and cholesterol. The cytolytic activity is not prevented by cholesterol or sphingomyelin. This is Cytolysin Uc-1 from Urticina crassicornis (Mottled anemone).